Here is a 322-residue protein sequence, read N- to C-terminus: MITNRQQSILNAIVEDYVDYGLPVGSKTVIERHQVNVSPATIRNEMKILEGMGLIEKAHASSGRSPSIKGFRYYVDQLLENTSPRTEFNNQRLNKLLADYNYNLSNALSVYANELSMSTKYTTLIMKPNQSKDLITDVHLFNTVAHLVIMVIVFESGNVEHLQLAVPEKISKNRLVQIANYIKSIFNADMRNDFSDETFMHSNDYLIVNQLIDLLNQRLNDITTDIFFGGKANLIDTLNEQNVNSIQQILQYLESNKILKLFEDDNHSGIDVKIGQEIDNGLEDISIILSDYHIDNHLKGHVAVIGPTAMRYQNVIQLLYKV.

Belongs to the HrcA family.

In terms of biological role, negative regulator of class I heat shock genes (grpE-dnaK-dnaJ and groELS operons). Prevents heat-shock induction of these operons. In Staphylococcus carnosus (strain TM300), this protein is Heat-inducible transcription repressor HrcA.